Here is a 342-residue protein sequence, read N- to C-terminus: Transcription initiation factor TFIID subunit 12 (342 aa).

Positions methionine 1 to alanine 221 are disordered. The segment covering proline 12–glutamine 35 has biased composition (polar residues). 4 stretches are compositionally biased toward low complexity: residues proline 39–proline 59, proline 67–alanine 89, glutamine 96–glycine 146, and glutamine 180–glutamine 192. Residues glutamine 193–methionine 218 are compositionally biased toward pro residues. The 68-residue stretch at glutamate 230 to methionine 297 folds into the Histone-fold domain.

The protein belongs to the TAF12 family. Interacts (via histone-fold domain) with taf-4 (via the histone-fold domain). Interaction may facilitate the nuclear localization of taf-4.

The protein resides in the nucleus. Part of the general transcription factor complex TFIID. Plays a role in recruiting taf-4 to the nucleus and thereby activating transcription initiation by RNA polymerase II, as part of the TFIID complex. This Caenorhabditis elegans protein is Transcription initiation factor TFIID subunit 12.